The primary structure comprises 425 residues: Calreticulin-1 (425 aa).

Positions 1–22 (MAKLNPKFISLILFALVVIVSA) are cleaved as a signal peptide. Asn59 carries N-linked (GlcNAc...) asparagine glycosylation. A disulfide bridge connects residues Cys108 and Cys140. Positions 112, 114, 131, and 138 each coordinate an alpha-D-glucoside. N-linked (GlcNAc...) asparagine glycosylation is present at Asn154. 7 repeat units span residues 194–205 (KQTGSLYSDWDL), 213–224 (DPSAKKPEDWDD), 230–241 (DPEDTKPAGYDD), 248–259 (DTDAKKPEDWDD), 263–273 (GEWTAPTIPNP), 277–287 (GEWKPKKIKNP), and 291–301 (GKWKAPMIDNP). Residues 194–259 (KQTGSLYSDW…DAKKPEDWDD (66 aa)) form a 4 X approximate repeats region. Basic and acidic residues-rich tracts occupy residues 213-235 (DPSAKKPEDWDDKEYIPDPEDTK) and 241-255 (DIPKEIPDTDAKKPE). The tract at residues 213 to 281 (DPSAKKPEDW…NPEYNGEWKP (69 aa)) is disordered. A 3 X approximate repeats region spans residues 263-301 (GEWTAPTIPNPEYNGEWKPKKIKNPAYKGKWKAPMIDNP). Glu321 provides a ligand contact to an alpha-D-glucoside. Residues 348 to 378 (EETWGKHKDAEKAAFDEAEKKREEEESKDAP) show a composition bias toward basic and acidic residues. The interval 348–425 (EETWGKHKDA…EETDAAHDEL (78 aa)) is disordered. Over residues 379–398 (AESDAEEEAEDDDNEGDDSD) the composition is skewed to acidic residues. Ser381 and Ser397 each carry phosphoserine. An N-linked (GlcNAc...) asparagine glycan is attached at Asn399. A compositionally biased stretch (basic and acidic residues) spans 399-412 (NESKSEETKEAEET). Positions 422–425 (HDEL) match the Prevents secretion from ER motif.

The protein belongs to the calreticulin family.

The protein resides in the endoplasmic reticulum lumen. Its function is as follows. Molecular calcium-binding chaperone promoting folding, oligomeric assembly and quality control in the ER via the calreticulin/calnexin cycle. This lectin may interact transiently with almost all of the monoglucosylated glycoproteins that are synthesized in the ER. The sequence is that of Calreticulin-1 (CRT1) from Arabidopsis thaliana (Mouse-ear cress).